An 83-amino-acid polypeptide reads, in one-letter code: uncharacterized protein (83 aa).

Belongs to the BolA/IbaG family.

This is an uncharacterized protein from Acinetobacter guillouiae (Acinetobacter genomosp. 11).